Reading from the N-terminus, the 951-residue chain is Serine/threonine-protein kinase 10 (951 aa).

Positions 36–294 (WEIIGELGDG…AAQLLEHPFV (259 aa)) constitute a Protein kinase domain. Residues 42 to 50 (LGDGAFGKV) and lysine 65 contribute to the ATP site. The active-site Proton acceptor is aspartate 157. The segment covering 319–330 (EENGEVEEEEAS) has biased composition (acidic residues). The segment at 319–479 (EENGEVEEEE…DSGSNSASES (161 aa)) is disordered. Positions 331–343 (DTPSSNKSVSQSA) are enriched in polar residues. Residues 345-356 (GEKDKHTGKEHV) show a composition bias toward basic and acidic residues. The span at 364–373 (PQNTDSQADI) shows a compositional bias: polar residues. Basic and acidic residues-rich tracts occupy residues 374–394 (HSQK…HDAV) and 410–427 (HEPK…EEHG). Positions 429 to 443 (AVSSNQRPKSSQSDR) are enriched in polar residues. Serine 483, serine 487, and serine 491 each carry phosphoserine; by PLK1. A coiled-coil region spans residues 583-723 (EQEMNSKRKF…NKKQQLLRDR (141 aa)). A compositionally biased stretch (basic and acidic residues) spans 785–800 (QERARLPKNQKAEAKT). The segment at 785–804 (QERARLPKNQKAEAKTRMTM) is disordered. Positions 898 to 928 (RENLRPRKKALEDELEHKKEEQEMFFRMNEE) form a coiled coil. The segment at 930–951 (AGHPFPSNKPAKFYSFSSPEAS) is disordered.

This sequence belongs to the protein kinase superfamily. STE Ser/Thr protein kinase family. STE20 subfamily. As to quaternary structure, homodimer. Autophosphorylates. Phosphorylated by plk1/plx1, suggesting the existence of a feedback loop with plk1/plx1. activation of the protein.

Its subcellular location is the cell membrane. The enzyme catalyses L-seryl-[protein] + ATP = O-phospho-L-seryl-[protein] + ADP + H(+). The catalysed reaction is L-threonyl-[protein] + ATP = O-phospho-L-threonyl-[protein] + ADP + H(+). Its function is as follows. May act as a polo kinase kinase by mediating phosphorylation of plk1/plx1 and subsequent activation of plk1/plx1 during oocyte maturation. This Xenopus tropicalis (Western clawed frog) protein is Serine/threonine-protein kinase 10 (stk10).